Consider the following 1303-residue polypeptide: Zinc finger CCCH domain-containing protein 4 (1303 aa).

Over residues 1–33 (MEAAPGTPPPPPSESPPPPSPPPPSTPSPPPCS) the composition is skewed to pro residues. The disordered stretch occupies residues 1–388 (MEAAPGTPPP…RDHDKPHQQS (388 aa)). The span at 53-73 (DREDGELEEGELEDDGAEETQ) shows a compositional bias: acidic residues. 2 positions are modified to phosphothreonine: Thr72 and Thr75. 3 positions are modified to phosphoserine: Ser76, Ser92, and Ser94. A compositionally biased stretch (basic and acidic residues) spans 80–99 (ERSRKEKGEKHHSDSDEEKS). Positions 95 to 128 (DEEKSHRRLKRKRKKEREKEKRRSKKRRKSKHKR) form a coiled coil. The span at 100–130 (HRRLKRKRKKEREKEKRRSKKRRKSKHKRHA) shows a compositional bias: basic residues. Acidic residues predominate over residues 135 to 144 (DFSDFSDDSD). Phosphotyrosine is present on Tyr155. Residues 194–218 (EDYENEQYGEYEGDEEEDMGKEDYD) are compositionally biased toward acidic residues. The span at 219–235 (DFTKELNQYRRAKEGSS) shows a compositional bias: basic and acidic residues. Over residues 238–251 (RGSRGRGRGYRGRG) the composition is skewed to basic residues. Over residues 252-274 (SRGGSRGRGMGRGSRGRGRGSMG) the composition is skewed to gly residues. A compositionally biased stretch (acidic residues) spans 278 to 304 (PEDEEDFYEEEMDYGESEEPMGDDDYD). Residues 305–321 (EYSKELNQYRRSKDSRG) show a composition bias toward basic and acidic residues. Basic residues predominate over residues 323–346 (GLSRGRGRGSRGRGKGMGRGRGRG). Over residues 358 to 369 (NDDEDFYDEDMG) the composition is skewed to acidic residues. Basic and acidic residues predominate over residues 377–388 (RSRDHDKPHQQS). 3 C3H1-type zinc fingers span residues 390–417 (KKGKVICKYFVEGRCTWGDHCNFSHDIE), 419–446 (PKKRELCKFYITGFCARAENCPYMHGDF), and 447–470 (PCKLYHTTGNCINGDDCMFSHDPL). Residues 486–496 (AEAGAEDEKEV) show a composition bias toward acidic residues. The interval 486 to 571 (AEAGAEDEKE…HEPLSPQQLQ (86 aa)) is disordered. 2 stretches are compositionally biased toward pro residues: residues 507–529 (LPKPPPGVGLLPTPPRPPGPQAP) and 539–558 (GGPPPPPPPPPPPPGPPQMP). Arg601 carries the asymmetric dimethylarginine modification. Positions 605-624 (PGGPPGPMGPGPNMGPPGPM) are enriched in pro residues. 3 disordered regions span residues 605–685 (PGGP…SGMM), 710–955 (GLLG…PRSQ), and 996–1288 (PPVP…ASLK). The segment covering 630–650 (PDMHPDMHPDMHPDMHADMHA) has biased composition (basic and acidic residues). Positions 659 to 673 (NPGPPMGPGGPPMMP) are enriched in pro residues. 2 stretches are compositionally biased toward basic and acidic residues: residues 717 to 739 (DYGHYEELPGEPGEHLFPEHPLE) and 782 to 795 (ERARRLAESSKQDR). Residues 767 to 800 (RALYLRIQQKQQEEEERARRLAESSKQDRENEEG) adopt a coiled-coil conformation. Ser807 and Ser808 each carry phosphoserine. The span at 815-843 (SSVTSILKTLRQQTSSRPPASVGELSSSG) shows a compositional bias: polar residues. Over residues 860-875 (ADPRLSRDPRLTRHVE) the composition is skewed to basic and acidic residues. 3 positions are modified to phosphoserine: Ser904, Ser907, and Ser908. Low complexity predominate over residues 904–918 (SLHSSPVGPSSSKGS). 2 stretches are compositionally biased toward polar residues: residues 1028–1038 (GASTDSSTQGA) and 1053–1062 (VNATGSSAAP). Residues 1067 to 1084 (KPSDPRVRKAPTDPRLQK) are compositionally biased toward basic and acidic residues. Residues 1097-1110 (PGPAEAPSPTASPS) show a composition bias toward low complexity. Ser1104 bears the Phosphoserine mark. At Thr1106 the chain carries Phosphothreonine. Phosphoserine occurs at positions 1108, 1110, and 1114. Thr1118 carries the phosphothreonine modification. Over residues 1129–1139 (GGLGQGGGGGQ) the composition is skewed to gly residues. Residues 1224–1234 (KAAAAPAATTA) show a composition bias toward low complexity. The span at 1235-1245 (TPPPEGAPPQP) shows a compositional bias: pro residues. The span at 1259–1268 (VKQTPKTGSG) shows a compositional bias: polar residues. Phosphoserine occurs at positions 1269 and 1275.

Belongs to the suppressor of sable family. In terms of assembly, interacts with WDR82.

The protein resides in the chromosome. Its function is as follows. RNA-binding protein that suppresses transcription of long non-coding RNAs (lncRNAs). LncRNAs are defined as transcripts more than 200 nucleotides that are not translated into protein. Together with WDR82, part of a transcription termination checkpoint that promotes transcription termination of lncRNAs and their subsequent degradation by the exosome. The transcription termination checkpoint is activated by the inefficiently spliced first exon of lncRNAs. This Homo sapiens (Human) protein is Zinc finger CCCH domain-containing protein 4.